Here is a 482-residue protein sequence, read N- to C-terminus: Ribosomal RNA small subunit methyltransferase F (482 aa).

Residues 119-125, Glu-143, Asp-170, and Asp-188 contribute to the S-adenosyl-L-methionine site; that span reads ASAPGSK. Catalysis depends on Cys-241, which acts as the Nucleophile.

Belongs to the class I-like SAM-binding methyltransferase superfamily. RsmB/NOP family.

It localises to the cytoplasm. The catalysed reaction is cytidine(1407) in 16S rRNA + S-adenosyl-L-methionine = 5-methylcytidine(1407) in 16S rRNA + S-adenosyl-L-homocysteine + H(+). Its function is as follows. Specifically methylates the cytosine at position 1407 (m5C1407) of 16S rRNA. This Shewanella sp. (strain MR-7) protein is Ribosomal RNA small subunit methyltransferase F.